Consider the following 642-residue polypeptide: Frizzled-1 (642 aa).

Positions 1–68 are cleaved as a signal peptide; it reads MAEEAAPSES…WLLEAPLLLG (68 aa). Disordered stretches follow at residues 26–45 and 76–99; these read PGRREEVGHEDTASHRRPRA and QVSGPGQQAPPPPQPQQSGQQYNG. The Extracellular segment spans residues 69–317; it reads VRAQAAGQVS…PEELRFSRTW (249 aa). One can recognise an FZ domain in the interval 106–225; that stretch reads PDHGYCQPIS…HGAGELCVGQ (120 aa). Intrachain disulfides connect C111-C172, C119-C165, C156-C193, C182-C222, and C186-C210. Residue N125 is glycosylated (N-linked (GlcNAc...) asparagine). A glycan (N-linked (GlcNAc...) asparagine) is linked at N226. A helical transmembrane segment spans residues 318–338; the sequence is IGIWSVLCCASTLFTVLTYLV. Topologically, residues 339 to 349 are cytoplasmic; that stretch reads DMRRFSYPERP. Residues 350 to 370 traverse the membrane as a helical segment; sequence IIFLSGCYTAVAVAYIAGFLL. Topologically, residues 371–397 are extracellular; that stretch reads EDRVVCNDKFAEDGARTVAQGTKKEGC. A helical membrane pass occupies residues 398-418; sequence TILFMMLYFFSMASSIWWVIL. Topologically, residues 419–440 are cytoplasmic; sequence SLTWFLAAGMKWGHEAIEANSQ. The helical transmembrane segment at 441 to 461 threads the bilayer; sequence YFHLAAWAVPAIKTITILALG. The Extracellular portion of the chain corresponds to 462 to 484; it reads QVDGDVLSGVCFVGLNNVDALRG. Residues 485 to 505 form a helical membrane-spanning segment; that stretch reads FVLAPLFVYLFIGTSFLLAGF. The Cytoplasmic portion of the chain corresponds to 506–531; it reads VSLFRIRTIMKHDGTKTEKLEKLMVR. A helical transmembrane segment spans residues 532 to 552; it reads IGVFSVLYTVPATIVIACYFY. The Extracellular segment spans residues 553-593; the sequence is EQAFRDQWERSWVAQSCKSYAIPCPHLQGGGGVPPHPPMSP. The helical transmembrane segment at 594–614 threads the bilayer; that stretch reads DFTVFMIKYLMTLIVGITSGF. Over 615-642 the chain is Cytoplasmic; the sequence is WIWSGKTLNSWRKFYTRLTNSKQGETTV. The short motif at 620-625 is the Lys-Thr-X-X-X-Trp motif, mediates interaction with the PDZ domain of Dvl family members element; the sequence is KTLNSW. Positions 640-642 match the PDZ-binding motif; sequence TTV.

It belongs to the G-protein coupled receptor Fz/Smo family. As to quaternary structure, interacts with MYOC. Interacts with WNT7B. Post-translationally, ubiquitinated by ZNRF3, leading to its degradation by the proteasome. As to expression, expressed in chondrocytes.

The protein localises to the cell membrane. Receptor for Wnt proteins. Activated by WNT7B. Activated by WNT3A, WNT3, WNT1 and to a lesser extent WNT2, but apparently not by WNT4, WNT5A, WNT5B, WNT6, WNT7A or WNT7B. Contradictory results showing activation by WNT7B have been described for mouse. Functions in the canonical Wnt/beta-catenin signaling pathway. The canonical Wnt/beta-catenin signaling pathway leads to the activation of disheveled proteins, inhibition of GSK-3 kinase, nuclear accumulation of beta-catenin and activation of Wnt target genes. A second signaling pathway involving PKC and calcium fluxes has been seen for some family members, but it is not yet clear if it represents a distinct pathway or if it can be integrated in the canonical pathway, as PKC seems to be required for Wnt-mediated inactivation of GSK-3 kinase. Both pathways seem to involve interactions with G-proteins. May be involved in transduction and intercellular transmission of polarity information during tissue morphogenesis and/or in differentiated tissues. This is Frizzled-1 (Fzd1) from Mus musculus (Mouse).